The sequence spans 667 residues: Putative L-type lectin-domain containing receptor kinase I.4 (667 aa).

The N-terminal stretch at 1–21 (MDCRLHLVLFFSCVCLICLSG) is a signal peptide. At 22 to 294 (QQETGFVYNG…PREEKKKLHP (273 aa)) the chain is on the extracellular side. A legume-lectin like region spans residues 24–257 (ETGFVYNGFH…NQYILGWSFS (234 aa)). N-linked (GlcNAc...) asparagine glycans are attached at residues Asn-55, Asn-110, Asn-124, Asn-128, Asn-181, Asn-204, and Asn-225. A helical membrane pass occupies residues 295 to 315 (LLIGLVILLVIPVLMVLGGVY). Over 316–667 (WYRRKKYAEV…THSILEGYGR (352 aa)) the chain is Cytoplasmic. The 276-residue stretch at 350–625 (FVKDALVGKG…QYLSQKQPLP (276 aa)) folds into the Protein kinase domain. ATP-binding positions include 356 to 364 (VGKGGFGKV) and Lys-378. Residue Asp-474 is the Proton acceptor of the active site.

In the C-terminal section; belongs to the protein kinase superfamily. Ser/Thr protein kinase family. This sequence in the N-terminal section; belongs to the leguminous lectin family.

The protein localises to the cell membrane. It carries out the reaction L-seryl-[protein] + ATP = O-phospho-L-seryl-[protein] + ADP + H(+). The catalysed reaction is L-threonyl-[protein] + ATP = O-phospho-L-threonyl-[protein] + ADP + H(+). The protein is Putative L-type lectin-domain containing receptor kinase I.4 (LECRK14) of Arabidopsis thaliana (Mouse-ear cress).